We begin with the raw amino-acid sequence, 427 residues long: Serine--tRNA ligase (427 aa).

Position 231-233 (231-233) interacts with L-serine; it reads TAE. 262–264 provides a ligand contact to ATP; that stretch reads RSE. Residue Glu-285 participates in L-serine binding. 349–352 contacts ATP; the sequence is EISS. Ser-385 provides a ligand contact to L-serine.

This sequence belongs to the class-II aminoacyl-tRNA synthetase family. Type-1 seryl-tRNA synthetase subfamily. Homodimer. The tRNA molecule binds across the dimer.

It localises to the cytoplasm. It catalyses the reaction tRNA(Ser) + L-serine + ATP = L-seryl-tRNA(Ser) + AMP + diphosphate + H(+). The enzyme catalyses tRNA(Sec) + L-serine + ATP = L-seryl-tRNA(Sec) + AMP + diphosphate + H(+). It functions in the pathway aminoacyl-tRNA biosynthesis; selenocysteinyl-tRNA(Sec) biosynthesis; L-seryl-tRNA(Sec) from L-serine and tRNA(Sec): step 1/1. Functionally, catalyzes the attachment of serine to tRNA(Ser). Is also able to aminoacylate tRNA(Sec) with serine, to form the misacylated tRNA L-seryl-tRNA(Sec), which will be further converted into selenocysteinyl-tRNA(Sec). The polypeptide is Serine--tRNA ligase (Methylococcus capsulatus (strain ATCC 33009 / NCIMB 11132 / Bath)).